Reading from the N-terminus, the 272-residue chain is 2-dehydro-3-deoxyphosphooctonate aldolase (272 aa).

The protein belongs to the KdsA family.

It is found in the cytoplasm. The catalysed reaction is D-arabinose 5-phosphate + phosphoenolpyruvate + H2O = 3-deoxy-alpha-D-manno-2-octulosonate-8-phosphate + phosphate. Its pathway is carbohydrate biosynthesis; 3-deoxy-D-manno-octulosonate biosynthesis; 3-deoxy-D-manno-octulosonate from D-ribulose 5-phosphate: step 2/3. It participates in bacterial outer membrane biogenesis; lipopolysaccharide biosynthesis. The polypeptide is 2-dehydro-3-deoxyphosphooctonate aldolase (Geotalea daltonii (strain DSM 22248 / JCM 15807 / FRC-32) (Geobacter daltonii)).